The following is a 293-amino-acid chain: AKT-interacting protein (293 aa).

The span at 1 to 11 (MNPFWSMSTSS) shows a compositional bias: polar residues. Residues 1 to 63 (MNPFWSMSTS…TSPAPAAQST (63 aa)) are disordered. The segment covering 14–23 (KRSEGEEKTL) has biased composition (basic and acidic residues). The residue at position 30 (serine 30) is a Phosphoserine. The UBC core domain occupies 74-222 (YLEYSLLAEF…VVDSVQVCTA (149 aa)). A compositionally biased stretch (basic and acidic residues) spans 253-265 (MLTQKKKPEEQHN). The disordered stretch occupies residues 253-293 (MLTQKKKPEEQHNKSVHVAGLSWVKPGSVQPFSKEEKTVAT).

Belongs to the ubiquitin-conjugating enzyme family. FTS subfamily. In terms of assembly, component of the FTS/Hook/FHIP complex (FHF complex), composed of AKTIP/FTS, FHIP1B, and one or more members of the Hook family of proteins HOOK1, HOOK2, and HOOK3. Interacts directly with HOOK1, HOOK2 and HOOK3. The FHF complex associates with the homotypic vesicular sorting complex (the HOPS complex). Also interacts with AKT1. May interact with FHIP1A.

Its subcellular location is the cytoplasm. The protein resides in the cell membrane. In terms of biological role, component of the FTS/Hook/FHIP complex (FHF complex). The FHF complex may function to promote vesicle trafficking and/or fusion via the homotypic vesicular protein sorting complex (the HOPS complex). Regulates apoptosis by enhancing phosphorylation and activation of AKT1. Increases release of TNFSF6 via the AKT1/GSK3B/NFATC1 signaling cascade. FHF complex promotes the distribution of AP-4 complex to the perinuclear area of the cell. In Pongo abelii (Sumatran orangutan), this protein is AKT-interacting protein (AKTIP).